We begin with the raw amino-acid sequence, 440 residues long: Argininosuccinate lyase (440 aa).

Belongs to the lyase 1 family. Argininosuccinate lyase subfamily.

The protein resides in the cytoplasm. The enzyme catalyses 2-(N(omega)-L-arginino)succinate = fumarate + L-arginine. It functions in the pathway amino-acid biosynthesis; L-arginine biosynthesis; L-arginine from L-ornithine and carbamoyl phosphate: step 3/3. The polypeptide is Argininosuccinate lyase (Clostridium botulinum (strain 657 / Type Ba4)).